The following is an 853-amino-acid chain: Guanine nucleotide exchange protein smcr8a (853 aa).

Residues Thr47–Asn219 enclose the uDENN FLCN/SMCR8-type domain. Disordered regions lie at residues Pro272–Ser298 and Leu418–Ser454. Residues Asp280–Ser298 show a composition bias toward polar residues. Residues Arg316–Thr753 form the cDENN FLCN/SMCR8-type domain. A compositionally biased stretch (low complexity) spans Gly421–Ser432. Residues Thr433–Ser454 show a composition bias toward polar residues. Residues Phe762–Lys826 enclose the dDENN FLCN/SMCR8-type domain.

This sequence belongs to the SMCR8 family. In terms of assembly, component of the C9orf72-SMCR8 complex. The C9orf72-SMCR8 complex associates with the ATG1/ULK1 kinase complex.

The protein resides in the cytoplasm. The protein localises to the nucleus. Functionally, component of the C9orf72-SMCR8 complex, a complex that has guanine nucleotide exchange factor (GEF) activity and regulates autophagy. In the complex, C9orf72 and SMCR8 probably constitute the catalytic subunits that promote the exchange of GDP to GTP, converting inactive GDP-bound RAB8A and RAB39B into their active GTP-bound form, thereby promoting autophagosome maturation. The C9orf72-SMCR8 complex also acts as a negative regulator of autophagy initiation by interacting with the ATG1/ULK1 kinase complex and inhibiting its protein kinase activity. This chain is Guanine nucleotide exchange protein smcr8a (smcr8a), found in Danio rerio (Zebrafish).